The chain runs to 815 residues: Protein-glutamine gamma-glutamyltransferase K (815 aa).

A compositionally biased stretch (basic and acidic residues) spans 1–10; it reads MEGPRSDVGR. Disordered stretches follow at residues 1–48 and 62–101; these read MEGP…SFWA and DDWG…AAGD. Positions 16 to 25 are enriched in pro residues; it reads WQPPTTPSPE. Residue T21 is modified to Phosphothreonine. A phosphoserine mark is found at S23, S71, S83, S91, and S94. Residues 66-78 are compositionally biased toward low complexity; it reads PEPSGSRSRGTSS. The segment covering 79–91 has biased composition (basic and acidic residues); it reads RGRDSRGGRRPES. Residues C376, H435, and D458 contribute to the active site. Ca(2+) contacts are provided by N498, D500, E547, and E552. Residues 791-815 form a disordered region; the sequence is GSGFSDAGGDSRSGENIPMAYRGGA. The residue at position 803 (S803) is a Phosphoserine.

Belongs to the transglutaminase superfamily. Transglutaminase family. Interacts with PLAAT4. Ca(2+) is required as a cofactor. Post-translationally, tyrosine-phosphorylated. In terms of processing, palmitoylated. The membrane anchorage region possesses a cluster of five cysteines within which fatty acid(s) may become thioester-linked. It is subject to phorbol ester-stimulated phosphorylation and is hypersensitive to proteolysis, which releases the enzyme in a soluble form. In terms of tissue distribution, expressed in large amounts in epithelial tissues (lung, liver and kidney).

It is found in the membrane. It carries out the reaction L-glutaminyl-[protein] + L-lysyl-[protein] = [protein]-L-lysyl-N(6)-5-L-glutamyl-[protein] + NH4(+). In terms of biological role, catalyzes the cross-linking of proteins and the conjugation of polyamines to proteins. Responsible for cross-linking epidermal proteins during formation of the stratum corneum. Involved in cell proliferation. This is Protein-glutamine gamma-glutamyltransferase K (Tgm1) from Mus musculus (Mouse).